We begin with the raw amino-acid sequence, 333 residues long: Acyl-CoA wax alcohol acyltransferase 2 (333 aa).

A run of 3 helical transmembrane segments spans residues 15–35 (VFAL…VIIV), 38–58 (YLVV…WLAF), and 130–150 (TFPG…VPFL).

The protein belongs to the diacylglycerol acyltransferase family. In terms of assembly, monomer. As to expression, expressed in Mueller cells of the retina (at protein level). Abundant in tissues rich in sebaceous glands such as the preputial gland and eyelid.

Its subcellular location is the endoplasmic reticulum membrane. The enzyme catalyses a long chain fatty alcohol + a fatty acyl-CoA = a wax ester + CoA. It carries out the reaction all-trans-retinol + an acyl-CoA = an all-trans-retinyl ester + CoA. It catalyses the reaction an acyl-CoA + a 1,2-diacyl-sn-glycerol = a triacyl-sn-glycerol + CoA. The catalysed reaction is 9-cis-retinol + a fatty acyl-CoA = 9-cis-retinyl ester + CoA. The enzyme catalyses 11-cis-retinol + a fatty acyl-CoA = 11-cis-retinyl ester + CoA. It carries out the reaction 13-cis-retinol + a fatty acyl-CoA = 13-cis-retinyl ester + CoA. It catalyses the reaction a 1-acylglycerol + an acyl-CoA = a 1,2-diacylglycerol + CoA. The catalysed reaction is 1-O-alkylglycerol + an acyl-CoA = 1-O-alkyl-3-acylglycerol + CoA. The enzyme catalyses a 2-acylglycerol + an acyl-CoA = a 1,2-diacyl-sn-glycerol + CoA. It carries out the reaction 2-(9Z-octadecenoyl)-glycerol + hexadecanoyl-CoA = 1-hexadecanoyl-2-(9Z-octadecenoyl)-sn-glycerol + CoA. It catalyses the reaction 1,2-di-(9Z-octadecenoyl)-sn-glycerol + hexadecanoyl-CoA = 1,2-di-(9Z)-octadecenoyl-3-hexadecanoyl-sn-glycerol + CoA. The catalysed reaction is hexadecan-1-ol + hexadecanoyl-CoA = hexadecanyl hexadecanoate + CoA. The enzyme catalyses hexadecane-1,2-diol + hexadecanoyl-CoA = 2-hydroxyhexadecyl hexadecanoate + CoA. It carries out the reaction all-trans-retinol + hexadecanoyl-CoA = all-trans-retinyl hexadecanoate + CoA. It catalyses the reaction 1,2-di-(9Z-octadecenoyl)-sn-glycerol + (9Z)-octadecenoyl-CoA = 1,2,3-tri-(9Z-octadecenoyl)-glycerol + CoA. The catalysed reaction is hexadecan-1-ol + (9Z)-octadecenoyl-CoA = hexadecanyl (9Z)-octadecenoate + CoA. The enzyme catalyses (9Z)-hexadecen-1-ol + (9Z)-octadecenoyl-CoA = 1-O-(9Z)-hexadecenyl (9Z)-octadecenoate + CoA. It carries out the reaction octadecan-1-ol + (9Z)-octadecenoyl-CoA = 1-O-octadecyl (9Z)-octadecenoate + CoA. It catalyses the reaction (9Z)-octadecen-1-ol + (9Z)-octadecenoyl-CoA = 1-O-(9Z)-octadecenyl (9Z)-octadecenoate + CoA. The catalysed reaction is hexadecan-1-ol + (9Z)-hexadecenoyl-CoA = 1-O-hexadecyl (9Z)-hexadecenoate + CoA. The enzyme catalyses hexadecan-1-ol + octadecanoyl-CoA = hexadecanyl octadecanoate + CoA. It carries out the reaction 11-cis-retinol + hexadecanoyl-CoA = 11-cis-retinyl hexadecanoate + CoA. It catalyses the reaction 1-O-(9Z-octadecenyl)-glycerol + (9Z)-octadecenoyl-CoA = 1-O-(9Z-octadecyl)-3-(9Z-octadecenoyl)-glycerol + CoA. The catalysed reaction is 1-(9Z-octadecenoyl)-glycerol + (9Z)-octadecenoyl-CoA = 1,2-di-(9Z-octadecenoyl)-glycerol + CoA. The enzyme catalyses 11-cis-retinol + tetradecanoyl-CoA = 11-cis-retinyl tetradecanoate + CoA. It carries out the reaction 9-cis-retinol + tetradecanoyl-CoA = 9-cis-retinyl tetradecanoate + CoA. It catalyses the reaction 9-cis-retinol + hexadecanoyl-CoA = 9-cis-retinyl hexadecanoate + CoA. The catalysed reaction is 13-cis-retinol + tetradecanoyl-CoA = 13-cis-retinyl tetradecanoate + CoA. The enzyme catalyses all-trans-retinol + tetradecanoyl-CoA = all-trans-retinyl tetradecanoate + CoA. It carries out the reaction tetradecan-1-ol + tetradecanoyl-CoA = tetradecanyl tetradecanoate + CoA. 11-cis retinoids act as allosteric modulators of acyl-CoA retinol O-fatty-acyltransferase (ARAT) activity by suppressing esterification of 9-cis, 13-cis, or all-trans retinols concurrently increasing the enzyme specificity toward 11-cis isomer. Its function is as follows. Acyltransferase that catalyzes the formation of ester bonds between fatty alcohols and fatty acyl-CoAs to form wax monoesters. Shows a preference for medium chain acyl-CoAs from C12 to C16 in length and fatty alcohols shorter than C20, as the acyl donor and acceptor, respectively. Also possesses fatty acyl-CoA retinol acyltransferase (ARAT) activity that preferentially esterifies 11-cis-retinol, a chromophore precursor of bleached opsin pigments in cone cells. Shows higher catalytic efficiency toward 11-cis-retinol versus 9-cis-retinol, 13- cis-retinol and all-trans-retinol substrates. This Mus musculus (Mouse) protein is Acyl-CoA wax alcohol acyltransferase 2 (Awat2).